A 242-amino-acid chain; its full sequence is Probable transcriptional regulatory protein NMA1902 (242 aa).

This sequence belongs to the TACO1 family.

The protein resides in the cytoplasm. This is Probable transcriptional regulatory protein NMA1902 from Neisseria meningitidis serogroup A / serotype 4A (strain DSM 15465 / Z2491).